The primary structure comprises 78 residues: Large ribosomal subunit protein bL28 (78 aa).

It belongs to the bacterial ribosomal protein bL28 family.

This is Large ribosomal subunit protein bL28 from Haemophilus influenzae (strain 86-028NP).